We begin with the raw amino-acid sequence, 247 residues long: 23S rRNA (guanosine-2'-O-)-methyltransferase RlmB (247 aa).

Positions 197, 217, and 226 each coordinate S-adenosyl-L-methionine.

The protein belongs to the class IV-like SAM-binding methyltransferase superfamily. RNA methyltransferase TrmH family. RlmB subfamily.

It is found in the cytoplasm. It catalyses the reaction guanosine(2251) in 23S rRNA + S-adenosyl-L-methionine = 2'-O-methylguanosine(2251) in 23S rRNA + S-adenosyl-L-homocysteine + H(+). Its function is as follows. Specifically methylates the ribose of guanosine 2251 in 23S rRNA. In Vibrio vulnificus (strain CMCP6), this protein is 23S rRNA (guanosine-2'-O-)-methyltransferase RlmB.